The sequence spans 1293 residues: Phosphoribosylformylglycinamidine synthase (1293 aa).

ATP is bound by residues Gly-305 to Asp-316 and Ala-676. Mg(2+) contacts are provided by Asp-677, Glu-716, Asn-720, and Asp-884. Ser-886 contributes to the ATP binding site. A Glutamine amidotransferase type-1 domain is found at Met-1040 to Gly-1293. Cys-1133 serves as the catalytic Nucleophile. Active-site residues include His-1258 and Glu-1260.

It in the N-terminal section; belongs to the FGAMS family. Monomer.

It is found in the cytoplasm. The enzyme catalyses N(2)-formyl-N(1)-(5-phospho-beta-D-ribosyl)glycinamide + L-glutamine + ATP + H2O = 2-formamido-N(1)-(5-O-phospho-beta-D-ribosyl)acetamidine + L-glutamate + ADP + phosphate + H(+). It participates in purine metabolism; IMP biosynthesis via de novo pathway; 5-amino-1-(5-phospho-D-ribosyl)imidazole from N(2)-formyl-N(1)-(5-phospho-D-ribosyl)glycinamide: step 1/2. Its function is as follows. Phosphoribosylformylglycinamidine synthase involved in the purines biosynthetic pathway. Catalyzes the ATP-dependent conversion of formylglycinamide ribonucleotide (FGAR) and glutamine to yield formylglycinamidine ribonucleotide (FGAM) and glutamate. This is Phosphoribosylformylglycinamidine synthase from Shewanella denitrificans (strain OS217 / ATCC BAA-1090 / DSM 15013).